A 624-amino-acid polypeptide reads, in one-letter code: Aeromonas extracellular serine protease (624 aa).

The signal sequence occupies residues 1–24 (MKQTSLALAITALLSTLPSALVQA). C28 and C48 form a disulfide bridge. Position 53 (N53) interacts with Ca(2+). The region spanning 59 to 421 (QWYLLNSGQD…GKVRDVKGLE (363 aa)) is the Peptidase S8 domain. D102 functions as the Charge relay system in the catalytic mechanism. Residue D111 participates in Ca(2+) binding. The segment at 116–140 (VRPGSKNVVTGSDDPTPTDPDTAHG) is disordered. H139 (charge relay system) is an active-site residue. Positions 150, 152, 154, 156, 321, 322, 324, 327, 330, and 350 each coordinate Ca(2+). A disulfide bond links C325 and C350. The Charge relay system role is filled by S360. The region spanning 456–622 (LPPLVQLPWQ…SLRVLGHDAN (167 aa)) is the P/Homo B domain. D478, D512, D577, A579, N602, and N603 together coordinate Ca(2+).

It belongs to the peptidase S8 family. Furin subfamily. Forms a complex with the chaperone ORF2 in the periplasm. After translocation of the ASP-ORF2 complex from the periplasm to the extracellular space, the complex is dissociated in a pH-dependent manner. Ca(2+) is required as a cofactor.

It localises to the periplasm. The protein resides in the secreted. It catalyses the reaction Cleavage of -Lys-Lys-|-Xaa and -Lys-Arg-|-Xaa bonds.. Its activity is regulated as follows. Folding, maturation and production of the active form of the protease by the cell requires a protein (ORF2), encoded just downstream of asp, which acts as a chaperone. Formation of a complex with ORF2 in the periplasm also inactivates the protease activity and likely protects ASP from intrinsic proteases. In vitro, protease activity is inhibited by human alpha-2-macroglobulin, suggesting that this inhibitor can impede ASP virulence activities in A.sobria infection sites. However, slow ASP inhibition by alpha-2-macroglobulin in plasma may indicate insufficient ASP control in vivo. Activity is inhibited by serine protease inhibitors such as 4-(2-aminoethyl)-benzenesulfonyl fluoride (AEBSF) and diisopropyl fluorophosphate (DFP). Not inhibited by metallo-protease inhibitors and cysteine protease inhibitors. The treatment with reagents to modify sulfhydryl group do not reduce the activity. In terms of biological role, exhibits serine protease activity. Preferentially cleaves the peptide bond following two basic residues, one of which is Lys, but does not recognize the bond following a single basic residue. Probable potent virulence factor that cleaves various host plasma proteins, including prekallikrein, prothrombin and fibrinogen. ASP induces vascular leakage and reduction in blood pressure by activating the host plasma kallikrein/kinin system. It affects the host coagulation system during infection through activation of prothrombin to alpha-thrombin and degradation of fibrinogen, which impairs plasma clottability. It also hydrolyzes the complement component C5, releasing the C5a anaphylatoxin, which causes the formation of pus and edema. In addition, degrades its external chaperone ORF2 after the secretion of the ASP-ORF2 complex. This is Aeromonas extracellular serine protease from Aeromonas sobria.